The following is a 531-amino-acid chain: Light-independent protochlorophyllide reductase subunit B (531 aa).

Aspartate 36 lines the [4Fe-4S] cluster pocket. Aspartate 287 acts as the Proton donor in catalysis. Residue 422–423 participates in substrate binding; the sequence is GL.

It belongs to the ChlB/BchB/BchZ family. In terms of assembly, protochlorophyllide reductase is composed of three subunits; BchL, BchN and BchB. Forms a heterotetramer of two BchB and two BchN subunits. Requires [4Fe-4S] cluster as cofactor.

It carries out the reaction chlorophyllide a + oxidized 2[4Fe-4S]-[ferredoxin] + 2 ADP + 2 phosphate = protochlorophyllide a + reduced 2[4Fe-4S]-[ferredoxin] + 2 ATP + 2 H2O. Its pathway is porphyrin-containing compound metabolism; bacteriochlorophyll biosynthesis (light-independent). In terms of biological role, component of the dark-operative protochlorophyllide reductase (DPOR) that uses Mg-ATP and reduced ferredoxin to reduce ring D of protochlorophyllide (Pchlide) to form chlorophyllide a (Chlide). This reaction is light-independent. The NB-protein (BchN-BchB) is the catalytic component of the complex. The chain is Light-independent protochlorophyllide reductase subunit B from Rhodopseudomonas palustris (strain BisA53).